The chain runs to 354 residues: 4-hydroxy-3-methylbut-2-en-1-yl diphosphate synthase (flavodoxin) (354 aa).

Residues Cys265, Cys268, Cys300, and Glu307 each coordinate [4Fe-4S] cluster.

It belongs to the IspG family. It depends on [4Fe-4S] cluster as a cofactor.

The enzyme catalyses (2E)-4-hydroxy-3-methylbut-2-enyl diphosphate + oxidized [flavodoxin] + H2O + 2 H(+) = 2-C-methyl-D-erythritol 2,4-cyclic diphosphate + reduced [flavodoxin]. The protein operates within isoprenoid biosynthesis; isopentenyl diphosphate biosynthesis via DXP pathway; isopentenyl diphosphate from 1-deoxy-D-xylulose 5-phosphate: step 5/6. In terms of biological role, converts 2C-methyl-D-erythritol 2,4-cyclodiphosphate (ME-2,4cPP) into 1-hydroxy-2-methyl-2-(E)-butenyl 4-diphosphate. The protein is 4-hydroxy-3-methylbut-2-en-1-yl diphosphate synthase (flavodoxin) of Hydrogenobaculum sp. (strain Y04AAS1).